The sequence spans 132 residues: Small ribosomal subunit protein uS8 (132 aa).

This sequence belongs to the universal ribosomal protein uS8 family. As to quaternary structure, part of the 30S ribosomal subunit. Contacts proteins S5 and S12.

Its function is as follows. One of the primary rRNA binding proteins, it binds directly to 16S rRNA central domain where it helps coordinate assembly of the platform of the 30S subunit. The chain is Small ribosomal subunit protein uS8 from Macrococcus caseolyticus (strain JCSC5402) (Macrococcoides caseolyticum).